The primary structure comprises 223 residues: Cytidylate kinase (223 aa).

Residues 1 to 23 (MSTSPLVIAIDGPSGSGKSSTSR) form a disordered region. 12–20 (GPSGSGKSS) contacts ATP.

It belongs to the cytidylate kinase family. Type 1 subfamily.

Its subcellular location is the cytoplasm. It carries out the reaction CMP + ATP = CDP + ADP. The catalysed reaction is dCMP + ATP = dCDP + ADP. The chain is Cytidylate kinase from Cutibacterium acnes (strain DSM 16379 / KPA171202) (Propionibacterium acnes).